Here is an 83-residue protein sequence, read N- to C-terminus: RNA-binding protein Hfq (83 aa).

The region spanning 10–70 (DTFLNQVRKE…ISTVMPLRPI (61 aa)) is the Sm domain.

This sequence belongs to the Hfq family. Homohexamer.

In terms of biological role, RNA chaperone that binds small regulatory RNA (sRNAs) and mRNAs to facilitate mRNA translational regulation in response to envelope stress, environmental stress and changes in metabolite concentrations. Also binds with high specificity to tRNAs. The polypeptide is RNA-binding protein Hfq (Desulfitobacterium hafniense (strain DSM 10664 / DCB-2)).